The chain runs to 259 residues: 12alpha-hydroxysteroid dehydrogenase (259 aa).

Tyr162 serves as the catalytic Proton acceptor.

Belongs to the short-chain dehydrogenases/reductases (SDR) family. In terms of assembly, homotetramer.

It carries out the reaction cholate + NADP(+) = 3alpha,7alpha-dihydroxy-12-oxo-5beta-cholanate + NADPH + H(+). The catalysed reaction is deoxycholate + NADP(+) = 12-dehydrodeoxycholate + NADPH + H(+). Its function is as follows. Catalyzes the oxidation of the 12alpha-hydroxy group of bile acids, like cholate and deoxycholate. Is also able to catalyze the reverse reaction in vitro. Is likely involved in an epimerization pathway of bile acids that converts hydroxy groups from alpha to beta positions via stable oxo-intermediates, which occurs in the human gut. The chain is 12alpha-hydroxysteroid dehydrogenase from Clostridium sp. (strain ATCC 29733 / VPI C48-50).